The following is a 140-amino-acid chain: ATP synthase epsilon chain (140 aa).

Belongs to the ATPase epsilon chain family. As to quaternary structure, F-type ATPases have 2 components, CF(1) - the catalytic core - and CF(0) - the membrane proton channel. CF(1) has five subunits: alpha(3), beta(3), gamma(1), delta(1), epsilon(1). CF(0) has three main subunits: a, b and c.

The protein resides in the cell membrane. Its function is as follows. Produces ATP from ADP in the presence of a proton gradient across the membrane. This Enterococcus hirae (strain ATCC 9790 / DSM 20160 / JCM 8729 / LMG 6399 / NBRC 3181 / NCIMB 6459 / NCDO 1258 / NCTC 12367 / WDCM 00089 / R) protein is ATP synthase epsilon chain (atpC).